The chain runs to 305 residues: tRNA pseudouridine synthase B (305 aa).

The active-site Nucleophile is D39.

It belongs to the pseudouridine synthase TruB family. Type 1 subfamily.

It carries out the reaction uridine(55) in tRNA = pseudouridine(55) in tRNA. Functionally, responsible for synthesis of pseudouridine from uracil-55 in the psi GC loop of transfer RNAs. This chain is tRNA pseudouridine synthase B, found in Staphylococcus aureus (strain MW2).